Here is an 82-residue protein sequence, read N- to C-terminus: Antimicrobial peptide Smp43 (82 aa).

The signal sequence occupies residues 1–22; the sequence is MNRKLLLVTLMVTMLVMQPAEA. Positions 66 to 82 are excised as a propeptide; it reads EAGQMPFDEFMDILYES.

The protein belongs to the non-disulfide-bridged peptide (NDBP) superfamily. Long chain multifunctional peptide (group 2) family. In terms of tissue distribution, expressed by the venom gland.

The protein localises to the secreted. It is found in the target cell membrane. Antimicrobial peptide with moderate activity against Gram-positive bacteria and Gram-negative bacteria, as well as low activity against fungi. Acts by inducing bacterial membrane disruption. Shows activity against B.subtilis (MIC=4 ug/ml), S.epidermidis (MIC=64 ug/ml), S.aureus (MIC=32 ug/ml), E.coli (MIC=128 ug/ml), K.pneumoniae (MIC=64 ug/ml), P.aeruginosa (MIC=64 ug/ml), and C.albicans (MIC=128 ug/ml). Does not show hemolysis activity. The chain is Antimicrobial peptide Smp43 from Scorpio palmatus (Israeli golden scorpion).